We begin with the raw amino-acid sequence, 360 residues long: DNA integrity scanning protein DisA (360 aa).

The DAC domain maps to 9–147 (DNDLMDILNI…NNIKYVLRDS (139 aa)). Residues Gly-76, Leu-94, and 107 to 111 (TRHRT) each bind ATP.

This sequence belongs to the DisA family. As to quaternary structure, homooctamer. Mg(2+) serves as cofactor.

The catalysed reaction is 2 ATP = 3',3'-c-di-AMP + 2 diphosphate. In terms of biological role, participates in a DNA-damage check-point that is active prior to asymmetric division when DNA is damaged. DisA forms globular foci that rapidly scan along the chromosomes during sporulation, searching for lesions. When a lesion is present, DisA pauses at the lesion site. This triggers a cellular response that culminates in a temporary block in sporulation initiation. Its function is as follows. Also has diadenylate cyclase activity, catalyzing the condensation of 2 ATP molecules into cyclic di-AMP (c-di-AMP). c-di-AMP acts as a signaling molecule that couples DNA integrity with progression of sporulation. The rise in c-di-AMP level generated by DisA while scanning the chromosome, operates as a positive signal that advances sporulation; upon encountering a lesion, the DisA focus arrests at the damaged site and halts c-di-AMP synthesis. In Clostridium tetani (strain Massachusetts / E88), this protein is DNA integrity scanning protein DisA.